The following is a 180-amino-acid chain: Ribosome maturation factor RimM (180 aa).

One can recognise a PRC barrel domain in the interval 99-172 (EDEFYQVDLI…FLVVDPVAAG (74 aa)).

It belongs to the RimM family. In terms of assembly, binds ribosomal protein uS19.

The protein localises to the cytoplasm. Functionally, an accessory protein needed during the final step in the assembly of 30S ribosomal subunit, possibly for assembly of the head region. Essential for efficient processing of 16S rRNA. May be needed both before and after RbfA during the maturation of 16S rRNA. It has affinity for free ribosomal 30S subunits but not for 70S ribosomes. This chain is Ribosome maturation factor RimM, found in Bartonella henselae (strain ATCC 49882 / DSM 28221 / CCUG 30454 / Houston 1) (Rochalimaea henselae).